The primary structure comprises 375 residues: Nucleosome assembly protein 1-like 4 (375 aa).

The interval 1–28 is disordered; it reads MAENSLSDGGPADSVEAAKNASNTEKLT. A2 is modified (N-acetylalanine). Residues S5, S7, and S49 each carry the phosphoserine modification. Phosphothreonine is present on T51. A phosphoserine mark is found at S53 and S54. T58 is subject to Phosphothreonine. K105 carries the post-translational modification N6-acetyllysine. Phosphoserine is present on S125. K146 carries the N6-acetyllysine modification. The Nuclear localization signal signature appears at 265 to 271; sequence IKKKQKH. Residue S304 is modified to Phosphoserine. The interval 339–375 is disordered; the sequence is AIEDDDNFEEGEEGEEEELEGDEEGEDEDDADVNPKV.

It belongs to the nucleosome assembly protein (NAP) family. Interacts with core (H2A, H2B, H3, H4) and linker (H1) histones. Post-translationally, polyglutamylated and polyglycylated. These 2 modifications occur exclusively on glutamate residues and result in either polyglutamate or polyglycine chains on the gamma-carboxyl group. Both modifications can coexist on the same protein on adjacent residues, and lowering polyglycylation levels increases polyglutamylation, and reciprocally. Polyglutamylated by TTLL4. Phosphorylated at the G0/G1 boundary but it is not phosphorylated in S-phase. Phosphorylated protein remains in the cytoplasm in a complex with histones during the G0/G1 transition, whereas dephosphorylation triggers its transport into the nucleus at the G1/S-boundary.

It localises to the nucleus. The protein localises to the cytoplasm. Its function is as follows. Acts as a histone chaperone in nucleosome assembly. In condensing spermatids, mediates the loading of the heterodimer composed of histones H2AB1 and H2BC1/TH2B onto the nucleosomes, thereby promoting the replacement of histones to protamine in male germ cells. The protein is Nucleosome assembly protein 1-like 4 (Nap1l4) of Mus musculus (Mouse).